Consider the following 883-residue polypeptide: MSKELSPKYNPAEVEEGRYQTWLDQDVFKPSGDTEAKPYSIVIPPPNVTGKLHLGHAWDTTLQDIIIRQKRMQGFDTLWLPGMDHAGIATQAKVEERLREQGISRYDLGREKFLDKVWEWKDEYAATIKSQWGKMGLSVDYSRERFTLDEGLSKAVRKVFVDLYNKGWIYRGEFIINWDPAARTALSDIEVIHKDVEGAFYHMNYMLEDGSRALEVATTRPETMFGDVAVAVNPEDARYKDLIGQNVILPIINKPIPIVADEHADPEFGTGVVKITPAHDPNDFAVGQRHNLPQVNVMNDDGTMNELADEFNGMDRFEARKAVVAKLESLGNLVKIKKTTHSVGHSERTGVVVEPRLSTQWFVKMDQLAKNAIANQDTEDKVEFYPPRFNDTFMSWMENVHDWVISRQLWWGHQIPAWYNVNGEMYVGEDAPEGDGWTQDEDVLDTWFSSALWPFSTMGWPDTEAADFKRYFPTSTLVTGYDIIFFWVSRMIFQSLEFTGRQPFSNVLIHGLIRDEEGRKMSKSLGNGIDPMDVIEKYGADALRWFLSNGSAPGQDVRFSYEKMDASWNFINKIWNISRYILMNNEGLTLDQARENVEKVVNSQVGNVTDRWILHNLNETVGKVTENFDKFEFGVAGHILYNFIWEEFANWYVELTKEVLYSDNEDEKVITRSVLLYTLDQILRLLHPIMPFVTEEIFGQYAEGSIVLASYPQVNATFENQTAHKGVESLKDLIRSVRNSRAEVNVAPSKPITILVKTSDSELESFFKDNSNYIKRFTNPETLEISSAIATPELAMSSVITGAEIFLPLADLLNVEEELARLEKELAKWQKELDMVGKKLSNERFVANAKPEVVQKEKDKQTDYQTKYDATIARIEEMKKLVR.

Positions 46-56 (PNVTGKLHLGH) match the 'HIGH' region motif. The 'KMSKS' region motif lies at 520–524 (KMSKS). K523 is a binding site for ATP. The stretch at 809 to 844 (LADLLNVEEELARLEKELAKWQKELDMVGKKLSNER) forms a coiled coil.

This sequence belongs to the class-I aminoacyl-tRNA synthetase family. ValS type 1 subfamily. As to quaternary structure, monomer.

The protein localises to the cytoplasm. It catalyses the reaction tRNA(Val) + L-valine + ATP = L-valyl-tRNA(Val) + AMP + diphosphate. Catalyzes the attachment of valine to tRNA(Val). As ValRS can inadvertently accommodate and process structurally similar amino acids such as threonine, to avoid such errors, it has a 'posttransfer' editing activity that hydrolyzes mischarged Thr-tRNA(Val) in a tRNA-dependent manner. This is Valine--tRNA ligase from Streptococcus agalactiae serotype V (strain ATCC BAA-611 / 2603 V/R).